The primary structure comprises 84 residues: CDC42 small effector protein 2-A (84 aa).

S-palmitoyl cysteine attachment occurs at residues Cys10 and Cys11. The CRIB domain maps to 29-42; sequence IGEPTNFVHTAHVG.

It belongs to the CDC42SE/SPEC family.

It localises to the cytoplasm. It is found in the cytoskeleton. The protein localises to the cell membrane. In terms of biological role, probably involved in the organization of the actin cytoskeleton by acting downstream of CDC42, inducing actin filament assembly. The protein is CDC42 small effector protein 2-A (cdc42se2-a) of Xenopus laevis (African clawed frog).